Reading from the N-terminus, the 207-residue chain is Probable RNA 2'-phosphotransferase (207 aa).

This sequence belongs to the KptA/TPT1 family.

In terms of biological role, removes the 2'-phosphate from RNA via an intermediate in which the phosphate is ADP-ribosylated by NAD followed by a presumed transesterification to release the RNA and generate ADP-ribose 1''-2''-cyclic phosphate (APPR&gt;P). May function as an ADP-ribosylase. The polypeptide is Probable RNA 2'-phosphotransferase (Methanosarcina mazei (strain ATCC BAA-159 / DSM 3647 / Goe1 / Go1 / JCM 11833 / OCM 88) (Methanosarcina frisia)).